Reading from the N-terminus, the 219-residue chain is 2-hydroxy-3-keto-5-methylthiopentenyl-1-phosphate phosphatase (219 aa).

Belongs to the HAD-like hydrolase superfamily. MtnX family.

It catalyses the reaction 2-hydroxy-5-methylsulfanyl-3-oxopent-1-enyl phosphate + H2O = 1,2-dihydroxy-5-(methylsulfanyl)pent-1-en-3-one + phosphate. Its pathway is amino-acid biosynthesis; L-methionine biosynthesis via salvage pathway; L-methionine from S-methyl-5-thio-alpha-D-ribose 1-phosphate: step 4/6. Its function is as follows. Dephosphorylates 2-hydroxy-3-keto-5-methylthiopentenyl-1-phosphate (HK-MTPenyl-1-P) yielding 1,2-dihydroxy-3-keto-5-methylthiopentene (DHK-MTPene). This is 2-hydroxy-3-keto-5-methylthiopentenyl-1-phosphate phosphatase from Bacillus mycoides (strain KBAB4) (Bacillus weihenstephanensis).